The following is a 644-amino-acid chain: Exoribonuclease 2 (644 aa).

The region spanning 189-516 is the RNB domain; that stretch reads REDLTALDFV…NHRLLKAVIK (328 aa). The S1 motif domain occupies 561–643; sequence DTRFAAEIVD…ETRSIIARPV (83 aa).

This sequence belongs to the RNR ribonuclease family. RNase II subfamily.

It is found in the cytoplasm. The enzyme catalyses Exonucleolytic cleavage in the 3'- to 5'-direction to yield nucleoside 5'-phosphates.. Its function is as follows. Involved in mRNA degradation. Hydrolyzes single-stranded polyribonucleotides processively in the 3' to 5' direction. This is Exoribonuclease 2 from Escherichia coli (strain UTI89 / UPEC).